Reading from the N-terminus, the 234-residue chain is Synaptogyrin-4 (234 aa).

Residues 18-169 enclose the MARVEL domain; that stretch reads FLKRPKAITR…QAYLAFQELR (152 aa). A run of 4 helical transmembrane segments spans residues 25–45, 66–86, 104–124, and 145–165; these read ITRI…LTDG, CSIA…FLAL, LLDL…FCFL, and AAIT…YLAF. A disordered region spans residues 191–226; the sequence is SPPSAASPVNTPTTGPHGPSYASSSLSPYLSTPKAP. Low complexity predominate over residues 209 to 221; the sequence is PSYASSSLSPYLS.

Belongs to the synaptogyrin family.

The protein resides in the membrane. This is Synaptogyrin-4 (SYNGR4) from Bos taurus (Bovine).